We begin with the raw amino-acid sequence, 567 residues long: MHGRLKVKTSEEQAEAKRLEREQKLKLYQAATQTVFQKRQAGELDESVLELTSQILGANPDFATLWNCRREVLQQLEVQKSPEELATLVKAELGFLESCLRVNPKSYGTWHHRCWLLSRLPEPNWARELELCARFLEVDERNFHCWDYRRFVAAQAAVPPAEELAFTDSLITRNFSNYSSWHYRSCLLPQLHPQPDSGPQGRLPEDVLLKELELVQNAFFTDPNDQSAWFYHRWLLGRADPQDALRCLHVSRDEACLTVSFSRPLLVGSGMETLLLMVDESPLAVEWRTPEGRNRPSHIWLCDLPATSLNDQLPQHTFRVIWTAGDAQKECVLLKGRQEGWCRDSATDEQLFRCELSVEKSTVLQSELESCKELQELEPENKWCLLTIILLMRALDPLQYEKETLQYFQTLKAVDPMRAAYLDDLRSKFLLENSVLKMEYAEVRVLHLGHKDLTVLCHLEQLLLVTHLDLSHNRLRALPPALAALRCLEVLQANDNAIESLDGVTNLPRLQELILCNNRLQQPAVLQPLTSCPRLTLLNLQGNPLCQAEGSSEHLAELLPSVSSILT.

PFTA repeat units lie at residues 44–78 (LDESVLELTSQILGANPDFATLWNCRREVLQQLEV), 88–122 (LVKAELGFLESCLRVNPKSYGTWHHRCWLLSRLPE), 124–158 (NWARELELCARFLEVDERNFHCWDYRRFVAAQAAV), 159–193 (PPAEELAFTDSLITRNFSNYSSWHYRSCLLPQLHP), 207–241 (VLLKELELVQNAFFTDPNDQSAWFYHRWLLGRADP), and 363–397 (VLQSELESCKELQELEPENKWCLLTIILLMRALDP). The residue at position 98 (S98) is a Phosphoserine. LRR repeat units lie at residues 442 to 463 (EVRVLHLGHKDLTVLCHLEQLL), 464 to 486 (LVTHLDLSHNRLRALPPALAALR), 487 to 508 (CLEVLQANDNAIESLDGVTNLP), 509 to 530 (RLQELILCNNRLQQPAVLQPLT), and 534 to 555 (RLTLLNLQGNPLCQAEGSSEHL).

The protein belongs to the protein prenyltransferase subunit alpha family. Heterotrimer composed of RABGGTA, RABGGTB and CHM; within this trimer, RABGGTA and RABGGTB form the catalytic component B, while CHM (component A) mediates peptide substrate binding. The Rab GGTase dimer (RGGT) interacts with CHM (component A) prior to Rab protein binding; the association is stabilized by geranylgeranyl pyrophosphate (GGpp). The CHM:RGGT:Rab complex is destabilized by GGpp. Interacts with non-phosphorylated form of RAB8A; phosphorylation of RAB8A at 'Thr-72' disrupts this interaction.

The enzyme catalyses geranylgeranyl diphosphate + L-cysteinyl-[protein] = S-geranylgeranyl-L-cysteinyl-[protein] + diphosphate. With respect to regulation, the enzymatic reaction requires the aid of a Rab escort protein (also called component A), such as CHM. Its function is as follows. Catalyzes the transfer of a geranylgeranyl moiety from geranylgeranyl diphosphate to both cysteines of Rab proteins with the C-terminal sequence -XXCC, -XCXC and -CCXX, such as RAB1A, RAB3A, RAB5A and RAB7A. In Bos taurus (Bovine), this protein is Geranylgeranyl transferase type-2 subunit alpha (RABGGTA).